The chain runs to 407 residues: UDP-N-acetylglucosamine--N-acetylmuramyl-(pentapeptide) pyrophosphoryl-undecaprenol N-acetylglucosamine transferase (407 aa).

The segment at methionine 1–alanine 21 is disordered. Residues threonine 38–glycine 40, asparagine 157, serine 228, and glutamine 324 each bind UDP-N-acetyl-alpha-D-glucosamine.

This sequence belongs to the glycosyltransferase 28 family. MurG subfamily.

It is found in the cell membrane. It catalyses the reaction di-trans,octa-cis-undecaprenyl diphospho-N-acetyl-alpha-D-muramoyl-L-alanyl-D-glutamyl-meso-2,6-diaminopimeloyl-D-alanyl-D-alanine + UDP-N-acetyl-alpha-D-glucosamine = di-trans,octa-cis-undecaprenyl diphospho-[N-acetyl-alpha-D-glucosaminyl-(1-&gt;4)]-N-acetyl-alpha-D-muramoyl-L-alanyl-D-glutamyl-meso-2,6-diaminopimeloyl-D-alanyl-D-alanine + UDP + H(+). The protein operates within cell wall biogenesis; peptidoglycan biosynthesis. Its function is as follows. Cell wall formation. Catalyzes the transfer of a GlcNAc subunit on undecaprenyl-pyrophosphoryl-MurNAc-pentapeptide (lipid intermediate I) to form undecaprenyl-pyrophosphoryl-MurNAc-(pentapeptide)GlcNAc (lipid intermediate II). This Mycobacterium leprae (strain TN) protein is UDP-N-acetylglucosamine--N-acetylmuramyl-(pentapeptide) pyrophosphoryl-undecaprenol N-acetylglucosamine transferase.